Reading from the N-terminus, the 45-residue chain is Alpha-conotoxin-like Lp1.10 (45 aa).

Positions 1 to 27 are excised as a propeptide; the sequence is VVLGPASDGRNAAANVKAPDLIALTVR. Cystine bridges form between Cys-30/Cys-36 and Cys-31/Cys-44. Residues 32–34 form a lacks the Ser-Xaa-Pro motif that is crucial for potent interaction with nAChR region; the sequence is HNA. Cys-44 carries the post-translational modification Cysteine amide.

This sequence belongs to the conotoxin A superfamily. As to expression, expressed by the venom duct.

It is found in the secreted. Functionally, alpha-conotoxins act on postsynaptic membranes, they bind to the nicotinic acetylcholine receptors (nAChR) and thus inhibit them. Has possibly a distinct nAChR binding mode from other alpha-conotoxins, due to a different three residue motif (lacks the Ser-Xaa-Pro motif). The protein is Alpha-conotoxin-like Lp1.10 of Conus leopardus (Leopard cone).